The sequence spans 386 residues: Lipid-A-disaccharide synthase (386 aa).

It belongs to the LpxB family.

The enzyme catalyses a lipid X + a UDP-2-N,3-O-bis[(3R)-3-hydroxyacyl]-alpha-D-glucosamine = a lipid A disaccharide + UDP + H(+). It participates in bacterial outer membrane biogenesis; LPS lipid A biosynthesis. Condensation of UDP-2,3-diacylglucosamine and 2,3-diacylglucosamine-1-phosphate to form lipid A disaccharide, a precursor of lipid A, a phosphorylated glycolipid that anchors the lipopolysaccharide to the outer membrane of the cell. This Chromohalobacter salexigens (strain ATCC BAA-138 / DSM 3043 / CIP 106854 / NCIMB 13768 / 1H11) protein is Lipid-A-disaccharide synthase.